Consider the following 144-residue polypeptide: Protein MIX23 (144 aa).

Ala2 bears the N-acetylalanine mark. The stretch at Val82–Glu120 forms a coiled coil. The residue at position 100 (Lys100) is an N6-acetyllysine.

It belongs to the MIX23 family.

This Mus musculus (Mouse) protein is Protein MIX23.